The following is a 161-amino-acid chain: Ubiquitin-conjugating enzyme E2Q-like protein 1 (161 aa).

The 154-residue stretch at 1-154 folds into the UBC core domain; it reads MKELQDIARL…VKTHEKYGWV (154 aa). Cysteine 88 acts as the Glycyl thioester intermediate in catalysis.

Belongs to the ubiquitin-conjugating enzyme family. Interacts with FBXW7.

Its subcellular location is the nucleus. It carries out the reaction S-ubiquitinyl-[E1 ubiquitin-activating enzyme]-L-cysteine + [E2 ubiquitin-conjugating enzyme]-L-cysteine = [E1 ubiquitin-activating enzyme]-L-cysteine + S-ubiquitinyl-[E2 ubiquitin-conjugating enzyme]-L-cysteine.. The protein operates within protein modification; protein ubiquitination. In terms of biological role, probable E2 ubiquitin-protein ligase that catalyzes the covalent attachment of ubiquitin to target proteins. May facilitate the monoubiquitination and degradation of MTOR and CCNE1 through interaction with FBXW7. This is Ubiquitin-conjugating enzyme E2Q-like protein 1 (UBE2QL1) from Homo sapiens (Human).